Here is a 284-residue protein sequence, read N- to C-terminus: Heat stress transcription factor B-1 (284 aa).

Residues 12–106 (PAPFLSKTYQ…LLTDIRRRKS (95 aa)) mediate DNA binding. The interval 118-151 (VGSPSESNSGGGDDHGSSSTSSPGSSKNPGSVEN) is disordered. Residues 134–148 (SSSTSSPGSSKNPGS) show a composition bias toward low complexity. Residues 147-192 (GSVENMVADLSGENEKLKRENNNLSSELAAAKKQRDELVTFLTGHL) are hydrophobic repeat HR-A/B. The Nuclear localization signal signature appears at 247–252 (RKKRDR).

This sequence belongs to the HSF family. Class B subfamily. In terms of assembly, homotrimer. In terms of processing, exhibits temperature-dependent phosphorylation.

It is found in the nucleus. Transcriptional regulator that specifically binds DNA sequence 5'-AGAAnnTTCT-3' known as heat shock promoter elements (HSE). The sequence is that of Heat stress transcription factor B-1 (HSFB1) from Arabidopsis thaliana (Mouse-ear cress).